A 384-amino-acid chain; its full sequence is Glucans biosynthesis protein C (384 aa).

10 helical membrane passes run 17–37, 54–74, 91–111, 140–160, 173–193, 212–232, 240–260, 274–294, 311–331, and 338–358; these read AWLM…THSW, FIHA…SYML, VGIP…ILLQ, LWFL…FTWF, AISL…YAAI, FIVM…LAFI, FTTP…AYLL, TESV…FSLG, ASLF…AYIT, and LIGF…LYEI.

The protein belongs to the acyltransferase 3 family. OpgC subfamily.

It localises to the cell membrane. It participates in glycan metabolism; osmoregulated periplasmic glucan (OPG) biosynthesis. Its function is as follows. Necessary for the succinyl substitution of periplasmic glucans. Could catalyze the transfer of succinyl residues from the cytoplasmic side of the membrane to the nascent glucan backbones on the periplasmic side of the membrane. This Salmonella heidelberg (strain SL476) protein is Glucans biosynthesis protein C.